Here is a 318-residue protein sequence, read N- to C-terminus: Thymidylate synthase (318 aa).

Residues Arg25 and 180–181 (RR) each bind dUMP. The active-site Nucleophile is the Cys200. Residues 220–223 (RSGD), Asn231, and 261–263 (HIY) contribute to the dUMP site. Asp223 lines the (6R)-5,10-methylene-5,6,7,8-tetrahydrofolate pocket. Position 317 (Ala317) interacts with (6R)-5,10-methylene-5,6,7,8-tetrahydrofolate.

This sequence belongs to the thymidylate synthase family. Bacterial-type ThyA subfamily. In terms of assembly, homodimer.

It localises to the cytoplasm. It catalyses the reaction dUMP + (6R)-5,10-methylene-5,6,7,8-tetrahydrofolate = 7,8-dihydrofolate + dTMP. The protein operates within pyrimidine metabolism; dTTP biosynthesis. Catalyzes the reductive methylation of 2'-deoxyuridine-5'-monophosphate (dUMP) to 2'-deoxythymidine-5'-monophosphate (dTMP) while utilizing 5,10-methylenetetrahydrofolate (mTHF) as the methyl donor and reductant in the reaction, yielding dihydrofolate (DHF) as a by-product. This enzymatic reaction provides an intracellular de novo source of dTMP, an essential precursor for DNA biosynthesis. This chain is Thymidylate synthase, found in Lactobacillus gasseri (strain ATCC 33323 / DSM 20243 / BCRC 14619 / CIP 102991 / JCM 1131 / KCTC 3163 / NCIMB 11718 / NCTC 13722 / AM63).